A 263-amino-acid polypeptide reads, in one-letter code: Exosome complex component Rrp4 (263 aa).

The region spanning 51–127 (GKYIPSRKDF…KAMKVELSMR (77 aa)) is the S1 motif domain. Positions 135–196 (SKGRIIEVVP…DRLTTAIEMI (62 aa)) constitute a KH domain. Residues 213–263 (LRGEPEGTEGSDEEQLVDEEVAGVSLEDDDVTEETSRKVDVLLDNDTDETN) form a disordered region. Over residues 218–245 (EGTEGSDEEQLVDEEVAGVSLEDDDVTE) the composition is skewed to acidic residues.

It belongs to the RRP4 family. As to quaternary structure, component of the archaeal exosome complex. Forms a trimer of Rrp4 and/or Csl4 subunits. The trimer associates with a hexameric ring-like arrangement composed of 3 Rrp41-Rrp42 heterodimers.

Its subcellular location is the cytoplasm. In terms of biological role, non-catalytic component of the exosome, which is a complex involved in RNA degradation. Increases the RNA binding and the efficiency of RNA degradation. Confers strong poly(A) specificity to the exosome. The sequence is that of Exosome complex component Rrp4 from Methanococcoides burtonii (strain DSM 6242 / NBRC 107633 / OCM 468 / ACE-M).